A 626-amino-acid polypeptide reads, in one-letter code: Chaperone protein HtpG (626 aa).

The interval 1–341 (MAKKEFKAES…SEDLSLNISR (341 aa)) is a; substrate-binding. The tract at residues 342-552 (EMLQHDRQLK…DGEVTIEMEK (211 aa)) is b. Residues 553 to 626 (ILNAMPDSQN…FTNNICKVMV (74 aa)) form a c region.

The protein belongs to the heat shock protein 90 family. As to quaternary structure, homodimer.

Its subcellular location is the cytoplasm. Functionally, molecular chaperone. Has ATPase activity. The polypeptide is Chaperone protein HtpG (Bacillus subtilis (strain 168)).